We begin with the raw amino-acid sequence, 183 residues long: Ras-related protein Rap-2c (183 aa).

A GTP-binding site is contributed by 10 to 17; that stretch reads GSGGVGKS. An Effector region motif is present at residues 32–40; sequence YDPTIEDFY. GTP is bound by residues 57 to 61 and 116 to 119; these read DTAGT and NKVD. 2 S-palmitoyl cysteine lipidation sites follow: Cys-176 and Cys-177. Cys-180 bears the Cysteine methyl ester mark. Cys-180 carries the S-geranylgeranyl cysteine lipid modification. A propeptide spans 181 to 183 (removed in mature form); it reads VVQ.

It belongs to the small GTPase superfamily. Ras family. Palmitoylated. Palmitoylation is required for association with recycling endosome membranes and activation of TNIK.

The protein resides in the cytoplasm. The protein localises to the recycling endosome membrane. The catalysed reaction is GTP + H2O = GDP + phosphate + H(+). Small GTP-binding protein which cycles between a GDP-bound inactive and a GTP-bound active form. May play a role in cytoskeletal rearrangements and regulate cell spreading through activation of the effector TNIK. May play a role in SRE-mediated gene transcription. The polypeptide is Ras-related protein Rap-2c (RAP2C) (Bos taurus (Bovine)).